Consider the following 425-residue polypeptide: Formyl-CoA:oxalate CoA-transferase (425 aa).

CoA-binding positions include 17–18 (QS), Arg-38, 72–75 (LDTK), 96–98 (NFG), Arg-104, and 136–139 (KVYE). Residue Asp-168 is the Nucleophile of the active site. 247 to 249 (GGQ) is a substrate binding site.

The protein belongs to the CoA-transferase III family. Frc subfamily. In terms of assembly, homodimer.

The catalysed reaction is formyl-CoA + oxalate = oxalyl-CoA + formate. Its pathway is metabolic intermediate degradation; oxalate degradation; CO(2) and formate from oxalate: step 1/2. Functionally, involved in the catabolism of oxalate and in the adapatation to low pH via the induction of the oxalate-dependent acid tolerance response (ATR). Catalyzes the transfer of the CoA moiety from formyl-CoA to oxalate. This Rhodopseudomonas palustris (strain ATCC BAA-98 / CGA009) protein is Formyl-CoA:oxalate CoA-transferase.